Reading from the N-terminus, the 341-residue chain is Ribosomal RNA small subunit methyltransferase H (341 aa).

S-adenosyl-L-methionine contacts are provided by residues 47-49, aspartate 64, phenylalanine 91, aspartate 109, and glutamine 116; that span reads GGY. The segment at 292-319 is disordered; the sequence is VAASEEEASRNPRARSAKLRAGVRTEAP.

Belongs to the methyltransferase superfamily. RsmH family.

The protein localises to the cytoplasm. The enzyme catalyses cytidine(1402) in 16S rRNA + S-adenosyl-L-methionine = N(4)-methylcytidine(1402) in 16S rRNA + S-adenosyl-L-homocysteine + H(+). Specifically methylates the N4 position of cytidine in position 1402 (C1402) of 16S rRNA. The chain is Ribosomal RNA small subunit methyltransferase H from Rhizobium meliloti (strain 1021) (Ensifer meliloti).